The primary structure comprises 225 residues: NAD(P)H-quinone oxidoreductase subunit K, chloroplastic (225 aa).

[4Fe-4S] cluster is bound by residues cysteine 43, cysteine 44, cysteine 108, and cysteine 139.

It belongs to the complex I 20 kDa subunit family. NDH is composed of at least 16 different subunits, 5 of which are encoded in the nucleus. [4Fe-4S] cluster is required as a cofactor.

It is found in the plastid. The protein localises to the chloroplast thylakoid membrane. It carries out the reaction a plastoquinone + NADH + (n+1) H(+)(in) = a plastoquinol + NAD(+) + n H(+)(out). It catalyses the reaction a plastoquinone + NADPH + (n+1) H(+)(in) = a plastoquinol + NADP(+) + n H(+)(out). NDH shuttles electrons from NAD(P)H:plastoquinone, via FMN and iron-sulfur (Fe-S) centers, to quinones in the photosynthetic chain and possibly in a chloroplast respiratory chain. The immediate electron acceptor for the enzyme in this species is believed to be plastoquinone. Couples the redox reaction to proton translocation, and thus conserves the redox energy in a proton gradient. This Capsella bursa-pastoris (Shepherd's purse) protein is NAD(P)H-quinone oxidoreductase subunit K, chloroplastic.